The primary structure comprises 271 residues: Mannosyl-3-phosphoglycerate phosphatase (271 aa).

Catalysis depends on Asp13, which acts as the Nucleophile. Positions 13, 15, and 214 each coordinate Mg(2+).

This sequence belongs to the HAD-like hydrolase superfamily. MPGP family. It depends on Mg(2+) as a cofactor.

It localises to the cytoplasm. The catalysed reaction is 2-O-(alpha-D-mannosyl)-3-phosphoglycerate + H2O = (2R)-2-O-(alpha-D-mannosyl)-glycerate + phosphate. The polypeptide is Mannosyl-3-phosphoglycerate phosphatase (yedP) (Escherichia coli O6:H1 (strain CFT073 / ATCC 700928 / UPEC)).